The sequence spans 436 residues: Cyclin-dependent kinase 11B (436 aa).

A Nuclear localization signal motif is present at residues 25–30 (VKKNRK). The calmodulin-binding stretch occupies residues 30-44 (KKLVKGLHRAGPPPE). Residues 79 to 364 (FQCLNRIEEG…AEDGLKHEYF (286 aa)) form the Protein kinase domain. Residues 85–93 (IEEGTYGVV) and K108 contribute to the ATP site. S123 bears the Phosphoserine; by CDK7 mark. T129 bears the Phosphothreonine; by CDK7 mark. D203 serves as the catalytic Proton acceptor. At S230 the chain carries Phosphoserine. A Phosphotyrosine modification is found at Y235. T236 is modified (phosphothreonine). A Glycyl lysine isopeptide (Lys-Gly) (interchain with G-Cter in SUMO2) cross-link involves residue K282. Residues 383–406 (SEQQCVKRGTSPKPPEGGLGYSQL) form a disordered region. At T392 the chain carries Phosphothreonine. S393 carries the post-translational modification Phosphoserine.

Belongs to the protein kinase superfamily. CMGC Ser/Thr protein kinase family. CDC2/CDKX subfamily. In terms of assembly, may interact PAK1 and RANBP9. p110C interacts with RNPS1. Interacts with CCND3. Interacts with CCNL1 and CCNL2. Forms complexes with pre-mRNA-splicing factors, including at least SRSF1, SRSF2 AND SRSF7/SLU7. Mg(2+) is required as a cofactor.

Its subcellular location is the cytoplasm. The protein resides in the nucleus membrane. It is found in the endomembrane system. It localises to the perinuclear region. The enzyme catalyses L-seryl-[protein] + ATP = O-phospho-L-seryl-[protein] + ADP + H(+). It catalyses the reaction L-threonyl-[protein] + ATP = O-phospho-L-threonyl-[protein] + ADP + H(+). Functionally, plays multiple roles in cell cycle progression, cytokinesis and apoptosis. Involved in pre-mRNA splicing in a kinase activity-dependent manner. May act as a negative regulator of normal cell cycle progression. The chain is Cyclin-dependent kinase 11B (Cdk11b) from Rattus norvegicus (Rat).